Consider the following 229-residue polypeptide: Large ribosomal subunit protein uL1 (229 aa).

Belongs to the universal ribosomal protein uL1 family. In terms of assembly, part of the 50S ribosomal subunit.

Functionally, binds directly to 23S rRNA. The L1 stalk is quite mobile in the ribosome, and is involved in E site tRNA release. Its function is as follows. Protein L1 is also a translational repressor protein, it controls the translation of the L11 operon by binding to its mRNA. This is Large ribosomal subunit protein uL1 from Enterococcus faecalis (strain ATCC 700802 / V583).